The sequence spans 71 residues: uncharacterized protein (71 aa).

This is an uncharacterized protein from Archaeoglobus fulgidus (strain ATCC 49558 / DSM 4304 / JCM 9628 / NBRC 100126 / VC-16).